Consider the following 426-residue polypeptide: Serine/threonine-protein kinase ssn3 (426 aa).

The 328-residue stretch at 41-368 (YHIVGFISSG…AQEALEHPYF (328 aa)) folds into the Protein kinase domain. ATP contacts are provided by residues 47 to 55 (ISSGTYGRV) and K71. The Proton acceptor role is filled by D173. Residues 390-426 (RVTQDDNDIRSGSLPGTKRSGLPDDSLMGRAAKRLKE) are disordered.

It belongs to the protein kinase superfamily. CMGC Ser/Thr protein kinase family. CDC2/CDKX subfamily. Component of the srb8-11 complex, a regulatory module of the Mediator complex. Mg(2+) serves as cofactor.

The protein resides in the nucleus. The catalysed reaction is L-seryl-[protein] + ATP = O-phospho-L-seryl-[protein] + ADP + H(+). It carries out the reaction L-threonyl-[protein] + ATP = O-phospho-L-threonyl-[protein] + ADP + H(+). The enzyme catalyses [DNA-directed RNA polymerase] + ATP = phospho-[DNA-directed RNA polymerase] + ADP + H(+). Its function is as follows. Component of the srb8-11 complex. The srb8-11 complex is a regulatory module of the Mediator complex which is itself involved in regulation of basal and activated RNA polymerase II-dependent transcription. The srb8-11 complex may be involved in the transcriptional repression of a subset of genes regulated by Mediator. It may inhibit the association of the Mediator complex with RNA polymerase II to form the holoenzyme complex. The srb8-11 complex phosphorylates the C-terminal domain (CTD) of the largest subunit of RNA polymerase II. The protein is Serine/threonine-protein kinase ssn3 (ssn3) of Aspergillus clavatus (strain ATCC 1007 / CBS 513.65 / DSM 816 / NCTC 3887 / NRRL 1 / QM 1276 / 107).